The sequence spans 148 residues: Small ribosomal subunit protein bS16 (148 aa).

The interval Gln-106–Gln-148 is disordered. Positions Ala-137–Gln-148 are enriched in low complexity.

This sequence belongs to the bacterial ribosomal protein bS16 family.

The polypeptide is Small ribosomal subunit protein bS16 (Frankia casuarinae (strain DSM 45818 / CECT 9043 / HFP020203 / CcI3)).